The chain runs to 397 residues: S-adenosylmethionine synthase (397 aa).

H17 contacts ATP. D19 contacts Mg(2+). E45 is a K(+) binding site. L-methionine is bound by residues E58 and Q101. The interval Q101–K111 is flexible loop. ATP contacts are provided by residues D176–K178, R243–F244, D252, R258–K259, and K279. Residue D252 participates in L-methionine binding. Residue K283 participates in L-methionine binding.

The protein belongs to the AdoMet synthase family. In terms of assembly, homotetramer; dimer of dimers. It depends on Mg(2+) as a cofactor. K(+) serves as cofactor.

Its subcellular location is the cytoplasm. It catalyses the reaction L-methionine + ATP + H2O = S-adenosyl-L-methionine + phosphate + diphosphate. It participates in amino-acid biosynthesis; S-adenosyl-L-methionine biosynthesis; S-adenosyl-L-methionine from L-methionine: step 1/1. Catalyzes the formation of S-adenosylmethionine (AdoMet) from methionine and ATP. The overall synthetic reaction is composed of two sequential steps, AdoMet formation and the subsequent tripolyphosphate hydrolysis which occurs prior to release of AdoMet from the enzyme. The sequence is that of S-adenosylmethionine synthase from Staphylococcus aureus (strain USA300).